Consider the following 971-residue polypeptide: Breast cancer type 2 susceptibility protein homolog (971 aa).

The segment covering 1–15 (MDQNGASGSHPNRLS) has biased composition (polar residues). Disordered regions lie at residues 1 to 30 (MDQNGASGSHPNRLSQGRGAHARERGATVS), 130 to 155 (SRKRDPKSHKAVQNEKRRGSSGLSVQ), 349 to 395 (KLKL…DQPN), and 420 to 466 (MQCS…SSHQ). The span at 130–139 (SRKRDPKSHK) shows a compositional bias: basic residues. The span at 349–364 (KLKLEPSSQKEQKSSK) shows a compositional bias: basic and acidic residues. Polar residues-rich tracts occupy residues 375–392 (SKQSCDINTKNEGTTILD), 420–432 (MQCSNGPSTSKNA), and 453–466 (KQTPNKSQTISSHQ). BRCA2 repeat units lie at residues 570-604 (AEPEFCGFRTASNKAIPISEKMKIKTAEFMAEFQS), 671-705 (NESQFFGFRTASNKAIEITEAMEKRGAMFLAQSKA), and 746-780 (SETEFFGFRTASNKGIVISENTKIKVAQFMSEFQA). Positions 916-971 (MERFAPKPSSTSTPLADRDLNRSKDCTKNRQDAEDMSPICMQPKKSRRLGLSRSRY) are disordered. The segment covering 931–948 (ADRDLNRSKDCTKNRQDA) has biased composition (basic and acidic residues). A compositionally biased stretch (basic residues) spans 959–971 (KKSRRLGLSRSRY).

As to quaternary structure, interacts with Rad9. Interacts with spn-A/Rad51. Interacts with cyclin CycG.

It is found in the nucleus. Its function is as follows. Involved in and required for double-strand break repair by meiotic and mitotic homologous recombination. During meiosis, has a dual role in the repair of meiotic double-stranded breaks and the efficient activation of the meiotic recombination checkpoint. In Drosophila melanogaster (Fruit fly), this protein is Breast cancer type 2 susceptibility protein homolog.